The sequence spans 281 residues: NADPH-dependent 7-cyano-7-deazaguanine reductase (281 aa).

87–89 (VES) is a substrate binding site. 89-90 (SK) is a binding site for NADPH. Catalysis depends on Cys188, which acts as the Thioimide intermediate. Asp195 functions as the Proton donor in the catalytic mechanism. Position 227 to 228 (227 to 228 (HE)) interacts with substrate. NADPH is bound at residue 256 to 257 (RG).

It belongs to the GTP cyclohydrolase I family. QueF type 2 subfamily. As to quaternary structure, homodimer.

It is found in the cytoplasm. The catalysed reaction is 7-aminomethyl-7-carbaguanine + 2 NADP(+) = 7-cyano-7-deazaguanine + 2 NADPH + 3 H(+). The protein operates within tRNA modification; tRNA-queuosine biosynthesis. Functionally, catalyzes the NADPH-dependent reduction of 7-cyano-7-deazaguanine (preQ0) to 7-aminomethyl-7-deazaguanine (preQ1). This chain is NADPH-dependent 7-cyano-7-deazaguanine reductase, found in Aliivibrio salmonicida (strain LFI1238) (Vibrio salmonicida (strain LFI1238)).